Here is a 680-residue protein sequence, read N- to C-terminus: Multidrug resistance protein MdtO (680 aa).

9 consecutive transmembrane segments (helical) span residues 43-63 (VILI…AVLF), 75-95 (FVAI…FLIY), 100-120 (GEPL…MFLM), 125-145 (LGLV…MLDY), 155-175 (WCIV…VLWF), 399-419 (FGGA…VMPW), 423-443 (IVEL…IATS), 454-474 (MVVT…YDLV), and 480-500 (ALGI…VWPE).

The protein belongs to the MdtO family. As to quaternary structure, could be part of a tripartite efflux system composed of MdtN, MdtO and MdtP.

It localises to the cell inner membrane. Its function is as follows. Could be involved in resistance to puromycin, acriflavine and tetraphenylarsonium chloride. The polypeptide is Multidrug resistance protein MdtO (mdtO) (Shigella flexneri).